The sequence spans 30 residues: Mycofactocin precursor peptide (30 aa).

This sequence belongs to the mycofactocin precursor peptide family. Interacts with MftB. The post-translational modifications that lead to mycofactocin involve oxidative decarboxylation of the C-terminal tyrosine residue catalyzed by MftC, introduction of a tyramine-valine cross-link, removal of the modified C-terminal dipeptide by MftE. The released dipeptide then undergoes oxidative deamination by MftD, glycosylation by MftF and methylation by an unknown enzyme.

Precursor peptide that leads to mycofactocin (MFT) after extensive post-translational modifications by enzymes encoded by adjacent genes. Mycofactocin acts as a redox cofactor of nicotinamide-dependent oxidoreductases encoded in the same locus. The sequence is that of Mycofactocin precursor peptide from Mycobacterium ulcerans (strain Agy99).